Consider the following 238-residue polypeptide: 3-dehydroquinate dehydratase (238 aa).

3-dehydroquinate is bound by residues 35-37 (ELR) and Arg-70. His-133 functions as the Proton donor/acceptor in the catalytic mechanism. The Schiff-base intermediate with substrate role is filled by Lys-160. Positions 202 and 225 each coordinate 3-dehydroquinate.

The protein belongs to the type-I 3-dehydroquinase family. In terms of assembly, homodimer.

The enzyme catalyses 3-dehydroquinate = 3-dehydroshikimate + H2O. The protein operates within metabolic intermediate biosynthesis; chorismate biosynthesis; chorismate from D-erythrose 4-phosphate and phosphoenolpyruvate: step 3/7. Involved in the third step of the chorismate pathway, which leads to the biosynthesis of aromatic amino acids. Catalyzes the cis-dehydration of 3-dehydroquinate (DHQ) and introduces the first double bond of the aromatic ring to yield 3-dehydroshikimate. The chain is 3-dehydroquinate dehydratase from Staphylococcus aureus (strain MSSA476).